Reading from the N-terminus, the 396-residue chain is DnaJ homolog subfamily A member 1 (396 aa).

The region spanning 6-68 (TYYDVLGVKP…KKRELYDKGG (63 aa)) is the J domain. An N6-acetyllysine modification is found at K66. A Phosphoserine modification is found at S83. The segment at 120–204 (GATRKLALQK…CNGRKIVREK (85 aa)) adopts a CR-type zinc-finger fold. Residues C133, C136, C149, C152, C176, C179, C192, and C195 each contribute to the Zn(2+) site. 4 CXXCXGXG motif repeats span residues 133-140 (CDKCEGRG), 149-156 (CPNCRGTG), 176-183 (CMECQGHG), and 192-199 (CKSCNGRK). S334 carries the phosphoserine modification. A disordered region spans residues 351–396 (VEETDEMDQVELVDFDPNQERRRHYNGEAYEDDEHHPRGGVQCQTS). The segment covering 352-364 (EETDEMDQVELVD) has biased composition (acidic residues). A Phosphotyrosine modification is found at Y380. C393 is modified (cysteine methyl ester). The S-farnesyl cysteine moiety is linked to residue C393. Positions 394–396 (QTS) are cleaved as a propeptide — removed in mature form.

In terms of assembly, identified in a complex with HSPA1B and BAX. Interacts with RNF207.

Its subcellular location is the membrane. It is found in the cytoplasm. The protein localises to the microsome. The protein resides in the mitochondrion. It localises to the nucleus. Its subcellular location is the perinuclear region. Functionally, co-chaperone for HSPA8/Hsc70. Plays a role in protein transport into mitochondria via its role as co-chaperone. Functions as co-chaperone for HSPA1B and negatively regulates the translocation of BAX from the cytosol to mitochondria in response to cellular stress, thereby protecting cells against apoptosis. Stimulates ATP hydrolysis, but not the folding of unfolded proteins mediated by HSPA1A (in vitro). Promotes apoptosis in response to cellular stress mediated by exposure to anisomycin or UV. The sequence is that of DnaJ homolog subfamily A member 1 (DNAJA1) from Pongo abelii (Sumatran orangutan).